A 123-amino-acid chain; its full sequence is Small ribosomal subunit protein uS13 (123 aa).

The segment at 97-123 (PVRGQRTRSNARTRKGPRPSRIKKKGK) is disordered. Residues 101–123 (QRTRSNARTRKGPRPSRIKKKGK) show a composition bias toward basic residues.

The protein belongs to the universal ribosomal protein uS13 family. Part of the 30S ribosomal subunit. Forms a loose heterodimer with protein S19. Forms two bridges to the 50S subunit in the 70S ribosome.

In terms of biological role, located at the top of the head of the 30S subunit, it contacts several helices of the 16S rRNA. In the 70S ribosome it contacts the 23S rRNA (bridge B1a) and protein L5 of the 50S subunit (bridge B1b), connecting the 2 subunits; these bridges are implicated in subunit movement. Contacts the tRNAs in the A and P-sites. This is Small ribosomal subunit protein uS13 from Fervidobacterium nodosum (strain ATCC 35602 / DSM 5306 / Rt17-B1).